The primary structure comprises 210 residues: Cdc42 effector protein 2 (210 aa).

The residue at position 2 (Ser2) is an N-acetylserine. A CRIB domain is found at 30 to 44 (ISPPLGDFRHTIHIG). Phosphoserine occurs at positions 31, 101, and 141. Positions 124–145 (AQAPPKPPRLHLETPQASPQEA) are disordered.

Belongs to the BORG/CEP family. In terms of assembly, interacts with CDC42 and RHOQ, in a GTP-dependent manner, and with SEPT7.

The protein localises to the endomembrane system. Its subcellular location is the cytoplasm. It is found in the cytoskeleton. Probably involved in the organization of the actin cytoskeleton. May act downstream of CDC42 to induce actin filament assembly leading to cell shape changes. Induces pseudopodia formation in fibroblasts in a CDC42-dependent manner. The chain is Cdc42 effector protein 2 (CDC42EP2) from Bos taurus (Bovine).